The primary structure comprises 196 residues: Putative 3-methyladenine DNA glycosylase (196 aa).

Belongs to the DNA glycosylase MPG family.

The sequence is that of Putative 3-methyladenine DNA glycosylase from Bacillus velezensis (strain DSM 23117 / BGSC 10A6 / LMG 26770 / FZB42) (Bacillus amyloliquefaciens subsp. plantarum).